A 156-amino-acid polypeptide reads, in one-letter code: Baculoviral IAP repeat-containing protein 5.2 (156 aa).

One copy of the BIR repeat lies at 30-100 (RLSTFANWPF…KHSPSCLFIA (71 aa)). Residue threonine 46 is modified to Phosphothreonine; by CDK1. Positions 69, 72, 89, and 96 each coordinate Zn(2+).

This sequence belongs to the IAP family. In terms of assembly, component of the CPC at least composed of survivin/birc5, incenp, cdca8/borealin and/or cdca9/dasra-A, and aurkb/aurora-B. Interacts directly with incenp (via N-terminus). Interacts with rxra; the interaction is stronger in the absence of 9-cis retinoic acids. Ubiquitination is required for centrosome-targeting.

It localises to the cytoplasm. The protein localises to the nucleus. It is found in the chromosome. Its subcellular location is the centromere. The protein resides in the cytoskeleton. It localises to the spindle. Functionally, component of the chromosomal passenger complex (CPC), a complex that acts as a key regulator of mitosis. The CPC complex has essential functions at the centromere in ensuring correct chromosome alignment and segregation and is required for chromatin-induced microtubule stabilization and spindle assembly. Does not appear to exhibit anti-apoptotic activity. Plays a role in increasing blood vessel size during development. The chain is Baculoviral IAP repeat-containing protein 5.2 (birc5.2) from Xenopus tropicalis (Western clawed frog).